The sequence spans 481 residues: Proline--tRNA ligase (481 aa).

Belongs to the class-II aminoacyl-tRNA synthetase family. ProS type 3 subfamily. In terms of assembly, homodimer.

Its subcellular location is the cytoplasm. The enzyme catalyses tRNA(Pro) + L-proline + ATP = L-prolyl-tRNA(Pro) + AMP + diphosphate. Catalyzes the attachment of proline to tRNA(Pro) in a two-step reaction: proline is first activated by ATP to form Pro-AMP and then transferred to the acceptor end of tRNA(Pro). The protein is Proline--tRNA ligase of Saccharolobus islandicus (strain M.16.27) (Sulfolobus islandicus).